The chain runs to 53 residues: Beta-defensin C7 (53 aa).

Disulfide bonds link C20/C49, C27/C42, and C32/C50.

It belongs to the beta-defensin family.

It localises to the secreted. Functionally, has bactericidal activity. In Bos taurus (Bovine), this protein is Beta-defensin C7.